The following is a 254-amino-acid chain: Isoprenyl transferase (254 aa).

Residue aspartate 12 is part of the active site. Aspartate 12 provides a ligand contact to Mg(2+). Substrate contacts are provided by residues 13 to 16 (GNGR), tryptophan 17, arginine 25, histidine 29, and 57 to 59 (SSE). The Proton acceptor role is filled by asparagine 60. Substrate-binding positions include tryptophan 61, arginine 63, arginine 180, and 186-188 (RLS). Glutamate 199 is a Mg(2+) binding site.

The protein belongs to the UPP synthase family. Homodimer. Requires Mg(2+) as cofactor.

Functionally, catalyzes the condensation of isopentenyl diphosphate (IPP) with allylic pyrophosphates generating different type of terpenoids. The chain is Isoprenyl transferase from Brucella suis biovar 1 (strain 1330).